Reading from the N-terminus, the 510-residue chain is ATP synthase subunit alpha (510 aa).

169–176 contributes to the ATP binding site; it reads GDRQTGKS.

Belongs to the ATPase alpha/beta chains family. F-type ATPases have 2 components, CF(1) - the catalytic core - and CF(0) - the membrane proton channel. CF(1) has five subunits: alpha(3), beta(3), gamma(1), delta(1), epsilon(1). CF(0) has three main subunits: a(1), b(2) and c(9-12). The alpha and beta chains form an alternating ring which encloses part of the gamma chain. CF(1) is attached to CF(0) by a central stalk formed by the gamma and epsilon chains, while a peripheral stalk is formed by the delta and b chains.

The protein resides in the cell membrane. The catalysed reaction is ATP + H2O + 4 H(+)(in) = ADP + phosphate + 5 H(+)(out). Its function is as follows. Produces ATP from ADP in the presence of a proton gradient across the membrane. The alpha chain is a regulatory subunit. This Wigglesworthia glossinidia brevipalpis protein is ATP synthase subunit alpha.